The primary structure comprises 259 residues: Deoxyribose-phosphate aldolase (259 aa).

Catalysis depends on D102, which acts as the Proton donor/acceptor. Catalysis depends on K166, which acts as the Schiff-base intermediate with acetaldehyde. Catalysis depends on K200, which acts as the Proton donor/acceptor.

Belongs to the DeoC/FbaB aldolase family. DeoC type 2 subfamily.

The protein localises to the cytoplasm. The catalysed reaction is 2-deoxy-D-ribose 5-phosphate = D-glyceraldehyde 3-phosphate + acetaldehyde. Its pathway is carbohydrate degradation; 2-deoxy-D-ribose 1-phosphate degradation; D-glyceraldehyde 3-phosphate and acetaldehyde from 2-deoxy-alpha-D-ribose 1-phosphate: step 2/2. Functionally, catalyzes a reversible aldol reaction between acetaldehyde and D-glyceraldehyde 3-phosphate to generate 2-deoxy-D-ribose 5-phosphate. In Vibrio cholerae serotype O1 (strain ATCC 39315 / El Tor Inaba N16961), this protein is Deoxyribose-phosphate aldolase.